We begin with the raw amino-acid sequence, 378 residues long: Phosphatidyl-myo-inositol mannosyltransferase (378 aa).

GDP-alpha-D-mannose contacts are provided by Tyr9 and Gly16. Residues Gln18, 62-63, and Arg68 contribute to the a 1,2-diacyl-sn-glycero-3-phospho-(1D-myo-inositol) site; that span reads YN. GDP-alpha-D-mannose is bound by residues Arg196, 201 to 202, 251 to 253, Lys256, 274 to 278, and Glu282; these read RK, VDD, and ESFGI.

This sequence belongs to the glycosyltransferase group 1 family. In terms of assembly, monomer. Mg(2+) is required as a cofactor.

Its subcellular location is the cell membrane. It carries out the reaction a 1,2-diacyl-sn-glycero-3-phospho-(1D-myo-inositol) + GDP-alpha-D-mannose = a 1,2-diacyl-sn-glycero-3-phospho-[alpha-D-mannopyranosyl-(1&lt;-&gt;6)-D-myo-inositol] + GDP + H(+). The protein operates within phospholipid metabolism; phosphatidylinositol metabolism. Functionally, involved in the biosynthesis of phosphatidyl-myo-inositol mannosides (PIM) which are early precursors in the biosynthesis of lipomannans (LM) and lipoarabinomannans (LAM). Catalyzes the addition of a mannosyl residue from GDP-D-mannose (GDP-Man) to the position 2 of the carrier lipid phosphatidyl-myo-inositol (PI) to generate a phosphatidyl-myo-inositol bearing an alpha-1,2-linked mannose residue (PIM1). The protein is Phosphatidyl-myo-inositol mannosyltransferase of Mycobacterium bovis (strain ATCC BAA-935 / AF2122/97).